The following is a 184-amino-acid chain: Photosystem I assembly protein Ycf4 (184 aa).

2 consecutive transmembrane segments (helical) span residues 22–42 (FFWA…GTSS) and 57–77 (ILFF…LFIS).

The protein belongs to the Ycf4 family.

It is found in the plastid. The protein resides in the chloroplast thylakoid membrane. Seems to be required for the assembly of the photosystem I complex. The protein is Photosystem I assembly protein Ycf4 of Nandina domestica (Heavenly bamboo).